A 325-amino-acid polypeptide reads, in one-letter code: mRNA decay activator protein ZFP36 (325 aa).

The necessary for nuclear export stretch occupies residues 1–15 (MDLAAIYKSLLSLSP). A necessary and sufficient for the association with mRNA decay enzymes and mRNA decay activation region spans residues 1–98 (MDLAAIYKSL…PTSPTATPTT (98 aa)). Necessary for localization of ARE-containing mRNAs to processing bodies (PBs) regions lie at residues 1 to 172 (MDLA…DLAA) and 98 to 325 (TSSR…SVSE). Residues 15-48 (PELPSDLGETESSTSWASSGPWSLSSSDSSLPEA) show a composition bias toward low complexity. The tract at residues 15–101 (PELPSDLGET…PTATPTTSSR (87 aa)) is disordered. The residue at position 58 (Ser-58) is a Phosphoserine; by MAPKAPK2. A Phosphoserine modification is found at Ser-64. A P-P-P-P-G repeat occupies 69-73 (PPPPG). Positions 75–101 (APLAPRPSSELSPSPTSPTATPTTSSR) are enriched in low complexity. 2 positions are modified to phosphoserine: Ser-86 and Ser-88. Residue Thr-90 is modified to Phosphothreonine. At Ser-91 the chain carries Phosphoserine. Residues 93 to 166 (TATPTTSSRY…GSRCHFIHNP (74 aa)) form a necessary for nuclear localization region. Residues 95 to 171 (TPTTSSRYKT…FIHNPSEDLA (77 aa)) form a necessary for RNA-binding region. C3H1-type zinc fingers lie at residues 101 to 129 (RYKT…HGLG) and 139 to 167 (KYKT…HNPS). Positions 101-192 (RYKTELCRTF…ISFSGLPSGR (92 aa)) are necessary for interaction with PABPN1. Ser-167 is modified (phosphoserine). The necessary for mRNA decay activation stretch occupies residues 172–325 (APGHPHVLRQ…PIFNRISVSE (154 aa)). Phosphoserine; by MAPKAPK2 is present on Ser-184. Disordered stretches follow at residues 185 to 248 (FSGL…TPAC) and 260 to 325 (VWGP…SVSE). Ser-195 is subject to Phosphoserine. The stretch at 196 to 200 (PPPAS) is one P-P-P-P-G repeat. The span at 204-214 (PSVPSWSFSPS) shows a compositional bias: low complexity. Ser-216 is modified (phosphoserine). A P-P-P-P-G repeat occupies 217 to 222 (PPPPPG). Ser-227 bears the Phosphoserine; by MAPK1; in vitro mark. A phosphoserine mark is found at Ser-275, Ser-295, and Ser-322. Over residues 285–295 (SSGSSLGGSDS) the composition is skewed to low complexity. The segment at 311–325 (APRRLPIFNRISVSE) is interaction with CNOT1.

As to quaternary structure, associates with cytoplasmic CCR4-NOT and PAN2-PAN3 deadenylase complexes to trigger ARE-containing mRNA deadenylation and decay processes. Part of a mRNA decay activation complex at least composed of poly(A)-specific exoribonucleases CNOT6, EXOSC2 and XRN1 and mRNA-decapping enzymes DCP1A and DCP2. Associates with the RNA exosome complex. Interacts (via phosphorylated form) with 14-3-3 proteins; these interactions promote exclusion of ZFP36 from cytoplasmic stress granules in response to arsenite treatment in a MAPKAPK2-dependent manner and does not prevent CCR4-NOT deadenylase complex recruitment or ZFP36-induced ARE-containing mRNA deadenylation and decay processes. Interacts with 14-3-3 proteins; these interactions occur in response to rapamycin in an Akt-dependent manner. Interacts with AGO2 and AGO4. Interacts (via C-terminus) with CNOT1; this interaction occurs in a RNA-independent manner and induces mRNA deadenylation. Interacts (via N-terminus) with CNOT6. Interacts with CNOT6L. Interacts (via C-terminus) with CNOT7; this interaction occurs in a RNA-independent manner, induces mRNA deadenylation and is inhibited in a phosphorylation MAPKAPK2-dependent manner. Interacts (via unphosphorylated form) with CNOT8; this interaction occurs in a RNA-independent manner and is inhibited in a phosphorylation MAPKAPK2-dependent manner. Interacts with DCP1A. Interacts (via N-terminus) with DCP2. Interacts with EDC3. Interacts (via N-terminus) with EXOSC2. Interacts with heat shock 70 kDa proteins. Interacts with KHSRP; this interaction increases upon cytokine-induced treatment. Interacts with MAP3K4; this interaction enhances the association with SH3KBP1/CIN85. Interacts with MAPKAPK2; this interaction occurs upon skeletal muscle satellite cell activation. Interacts with NCL. Interacts with NUP214; this interaction increases upon lipopolysaccharide (LPS) stimulation. Interacts with PABPC1; this interaction occurs in a RNA-dependent manner. Interacts (via hypophosphorylated form) with PABPN1 (via RRM domain and C-terminal arginine-rich region); this interaction occurs in the nucleus in a RNA-independent manner, decreases in presence of single-stranded poly(A) RNA-oligomer and in a p38 MAPK-dependent-manner and inhibits nuclear poly(A) tail synthesis. Interacts with PAN2. Interacts (via C3H1-type zinc finger domains) with PKM. Interacts (via C3H1-type zinc finger domains) with nuclear RNA poly(A) polymerase. Interacts with PPP2CA; this interaction occurs in LPS-stimulated cells and induces ZFP36 dephosphorylation, and hence may promote ARE-containing mRNAs decay. Interacts (via C-terminus) with PRR5L (via C-terminus); this interaction may accelerate ZFP36-mediated mRNA decay during stress. Interacts (via C-terminus) with SFN; this interaction occurs in a phosphorylation-dependent manner. Interacts (via extreme C-terminal region) with SH3KBP1/CIN85 (via SH3 domains); this interaction enhances MAP3K4-induced phosphorylation of ZFP36 at Ser-64 and Ser-91 and does not alter neither ZFP36 binding to ARE-containing transcripts nor TNF-alpha mRNA decay. Interacts with XRN1. Interacts (via C-terminus and Ser-184 phosphorylated form) with YWHAB; this interaction occurs in a p38/MAPKAPK2-dependent manner, increases cytoplasmic localization of ZFP36 and protects ZFP36 from Ser-184 dephosphorylation by serine/threonine phosphatase 2A, and hence may be crucial for stabilizing ARE-containing mRNAs. Interacts (via phosphorylated form) with YWHAE. Interacts (via C-terminus) with YWHAG; this interaction occurs in a phosphorylation-dependent manner. Interacts with YWHAH; this interaction occurs in a phosphorylation-dependent manner. Interacts with YWHAQ; this interaction occurs in a phosphorylation-dependent manner. Interacts with (via C-terminus) YWHAZ; this interaction occurs in a phosphorylation-dependent manner. Does not interact with SH3KBP1. Interacts (via P-P-P-P-G repeats) with GIGYF2; the interaction is direct. In terms of processing, phosphorylated. Phosphorylation at serine and/or threonine residues occurs in a p38 MAPK- and MAPKAPK2-dependent manner. Phosphorylated by MAPKAPK2 at Ser-58 and Ser-184; phosphorylation increases its stability and cytoplasmic localization, promotes binding to 14-3-3 adapter proteins and inhibits the recruitment of cytoplasmic CCR4-NOT and PAN2-PAN3 deadenylase complexes to the mRNA decay machinery, thereby inhibiting ZFP36-induced ARE-containing mRNA deadenylation and decay processes. Phosphorylation by MAPKAPK2 does not impair ARE-containing RNA-binding. Phosphorylated in a MAPKAPK2- and p38 MAPK-dependent manner upon skeletal muscle satellite cell activation; this phosphorylation inhibits ZFP36-mediated mRNA decay activity, and hence stabilizes MYOD1 mRNA. Phosphorylated by MAPK1 upon mitogen stimulation. Phosphorylated at Ser-64 and Ser-91; these phosphorylations increase in a SH3KBP1-dependent manner. Phosphorylated at serine and threonine residues in a pyruvate kinase PKM- and p38 MAPK-dependent manner. Phosphorylation at Ser-58 may participate in the PKM-mediated degradation of ZFP36 in a p38 MAPK-dependent manner. Dephosphorylated by serine/threonine phosphatase 2A at Ser-184. Post-translationally, ubiquitinated; pyruvate kinase (PKM)-dependent ubiquitination leads to proteasomal degradation through a p38 MAPK signaling pathway.

Its subcellular location is the nucleus. The protein resides in the cytoplasm. It localises to the cytoplasmic granule. The protein localises to the P-body. Functionally, zinc-finger RNA-binding protein that destabilizes numerous cytoplasmic AU-rich element (ARE)-containing mRNA transcripts by promoting their poly(A) tail removal or deadenylation, and hence provide a mechanism for attenuating protein synthesis. Acts as an 3'-untranslated region (UTR) ARE mRNA-binding adapter protein to communicate signaling events to the mRNA decay machinery. Recruits deadenylase CNOT7 (and probably the CCR4-NOT complex) via association with CNOT1, and hence promotes ARE-mediated mRNA deadenylation. Also functions by recruiting components of the cytoplasmic RNA decay machinery to the bound ARE-containing mRNAs. Self regulates by destabilizing its own mRNA. Binds to 3'-UTR ARE of numerous mRNAs. Also binds to ARE of its own mRNA. Plays a role in anti-inflammatory responses; suppresses tumor necrosis factor (TNF)-alpha production by stimulating ARE-mediated TNF-alpha mRNA decay and several other inflammatory ARE-containing mRNAs in interferon (IFN)- and/or lipopolysaccharide (LPS)-induced macrophages. Also plays a role in the regulation of dendritic cell maturation at the post-transcriptional level, and hence operates as part of a negative feedback loop to limit the inflammatory response. Promotes ARE-mediated mRNA decay of hypoxia-inducible factor HIF1A mRNA during the response of endothelial cells to hypoxia. Positively regulates early adipogenesis of preadipocytes by promoting ARE-mediated mRNA decay of immediate early genes (IEGs). Negatively regulates hematopoietic/erythroid cell differentiation by promoting ARE-mediated mRNA decay of the transcription factor STAT5B mRNA. Plays a role in maintaining skeletal muscle satellite cell quiescence by promoting ARE-mediated mRNA decay of the myogenic determination factor MYOD1 mRNA. Also associates with and regulates the expression of non-ARE-containing target mRNAs at the post-transcriptional level, such as MHC class I mRNAs. Participates in association with argonaute RISC catalytic components in the ARE-mediated mRNA decay mechanism; assists microRNA (miRNA) targeting ARE-containing mRNAs. May also play a role in the regulation of cytoplasmic mRNA decapping; enhances decapping of ARE-containing RNAs, in vitro. Involved in the delivery of target ARE-mRNAs to processing bodies (PBs). In addition to its cytosolic mRNA-decay function, affects nuclear pre-mRNA processing. Negatively regulates nuclear poly(A)-binding protein PABPN1-stimulated polyadenylation activity on ARE-containing pre-mRNA during LPS-stimulated macrophages. Also involved in the regulation of stress granule (SG) and P-body (PB) formation and fusion. Plays a role in the regulation of keratinocyte proliferation, differentiation and apoptosis. Plays a role as a tumor suppressor by inhibiting cell proliferation in breast cancer cells. The polypeptide is mRNA decay activator protein ZFP36 (Ovis aries (Sheep)).